The following is a 181-amino-acid chain: UPF0398 protein lin2003 (181 aa).

The protein belongs to the UPF0398 family.

The polypeptide is UPF0398 protein lin2003 (Listeria innocua serovar 6a (strain ATCC BAA-680 / CLIP 11262)).